A 196-amino-acid polypeptide reads, in one-letter code: Proteasome subunit beta (196 aa).

Position 1 (Met-1) is a propeptide, removed in mature form; by autocatalysis. Catalysis depends on Thr-2, which acts as the Nucleophile.

Belongs to the peptidase T1B family. The 20S proteasome core is composed of 14 alpha and 14 beta subunits that assemble into four stacked heptameric rings, resulting in a barrel-shaped structure. The two inner rings, each composed of seven catalytic beta subunits, are sandwiched by two outer rings, each composed of seven alpha subunits. The catalytic chamber with the active sites is on the inside of the barrel. Has a gated structure, the ends of the cylinder being occluded by the N-termini of the alpha-subunits. Is capped at one or both ends by the proteasome regulatory ATPase, PAN.

The protein resides in the cytoplasm. It carries out the reaction Cleavage of peptide bonds with very broad specificity.. Its activity is regulated as follows. The formation of the proteasomal ATPase PAN-20S proteasome complex, via the docking of the C-termini of PAN into the intersubunit pockets in the alpha-rings, triggers opening of the gate for substrate entry. Interconversion between the open-gate and close-gate conformations leads to a dynamic regulation of the 20S proteasome proteolysis activity. Component of the proteasome core, a large protease complex with broad specificity involved in protein degradation. The polypeptide is Proteasome subunit beta (Nanoarchaeum equitans (strain Kin4-M)).